Consider the following 477-residue polypeptide: UDP-N-acetylmuramate--L-alanine ligase (477 aa).

112-118 (GAHGKTT) is a binding site for ATP.

Belongs to the MurCDEF family.

Its subcellular location is the cytoplasm. The enzyme catalyses UDP-N-acetyl-alpha-D-muramate + L-alanine + ATP = UDP-N-acetyl-alpha-D-muramoyl-L-alanine + ADP + phosphate + H(+). The protein operates within cell wall biogenesis; peptidoglycan biosynthesis. Functionally, cell wall formation. In Delftia acidovorans (strain DSM 14801 / SPH-1), this protein is UDP-N-acetylmuramate--L-alanine ligase.